The chain runs to 318 residues: Pyrimidine-specific ribonucleoside hydrolase RihA (318 aa).

The active site involves histidine 240.

It belongs to the IUNH family. RihA subfamily.

Its function is as follows. Hydrolyzes cytidine or uridine to ribose and cytosine or uracil, respectively. In Shewanella sp. (strain ANA-3), this protein is Pyrimidine-specific ribonucleoside hydrolase RihA.